The primary structure comprises 199 residues: MLVSGCSISTNGFIMTEPDPISPSATNFIVSLVIMILIESLNWDKSRTILENSEDGNDRVESYCNSSIFKKSASISINFREYSAIRSFLVSSNNKMMESGVLSAISVNVSVLLPQRRILLSEVRSIPNVTGWSHLYSWKASTPISKETNRTLESSTACAMIPSSLHWKLTNWTQSLKPSIILLKRDASSNFASNIFSLF.

A helical membrane pass occupies residues 21–38 (ISPSATNFIVSLVIMILI).

The protein localises to the membrane. This is an uncharacterized protein from Saccharomyces cerevisiae (strain ATCC 204508 / S288c) (Baker's yeast).